Consider the following 202-residue polypeptide: FMN-dependent NADH:quinone oxidoreductase 1 (202 aa).

FMN is bound by residues Ser-9, 15–17 (SAS), 95–98 (MYNF), and 139–142 (TSGG).

This sequence belongs to the azoreductase type 1 family. As to quaternary structure, homodimer. FMN is required as a cofactor.

It carries out the reaction 2 a quinone + NADH + H(+) = 2 a 1,4-benzosemiquinone + NAD(+). The catalysed reaction is N,N-dimethyl-1,4-phenylenediamine + anthranilate + 2 NAD(+) = 2-(4-dimethylaminophenyl)diazenylbenzoate + 2 NADH + 2 H(+). In terms of biological role, quinone reductase that provides resistance to thiol-specific stress caused by electrophilic quinones. Its function is as follows. Also exhibits azoreductase activity. Catalyzes the reductive cleavage of the azo bond in aromatic azo compounds to the corresponding amines. The polypeptide is FMN-dependent NADH:quinone oxidoreductase 1 (Pseudomonas syringae pv. tomato (strain ATCC BAA-871 / DC3000)).